The primary structure comprises 330 residues: GTPase Obg (330 aa).

Positions 1 to 159 constitute an Obg domain; it reads MQFIDQARIT…WPLQLELKLL (159 aa). The 169-residue stretch at 160–328 folds into the OBG-type G domain; the sequence is AEVGIIGLPN…LLERVWKELG (169 aa). Residues 166-173, 191-195, 213-216, 280-283, and 309-311 contribute to the ATP site; these read GLPNAGKS, FTTLV, DIPG, NKQE, and SAA. Mg(2+) is bound by residues serine 173 and threonine 193.

The protein belongs to the TRAFAC class OBG-HflX-like GTPase superfamily. OBG GTPase family. Monomer. It depends on Mg(2+) as a cofactor.

It is found in the cytoplasm. In terms of biological role, an essential GTPase which binds GTP, GDP and possibly (p)ppGpp with moderate affinity, with high nucleotide exchange rates and a fairly low GTP hydrolysis rate. Plays a role in control of the cell cycle, stress response, ribosome biogenesis and in those bacteria that undergo differentiation, in morphogenesis control. The sequence is that of GTPase Obg from Parasynechococcus marenigrum (strain WH8102).